A 1216-amino-acid polypeptide reads, in one-letter code: AF4/FMR2 family member 1 (1216 aa).

Disordered stretches follow at residues 1–52 (MAAH…KGDE), 68–104 (KEFL…GAAS), 116–139 (IHTS…AQPR), 152–217 (PRLT…VSSK), 244–275 (AVTS…MQQK), and 352–728 (SWPP…RTSG). Composition is skewed to basic and acidic residues over residues 9-35 (NEDR…EAFP) and 78-99 (HRLD…HDRG). Residues 166-182 (RKCDRRAEGDSAPERKL) show a composition bias toward basic and acidic residues. Residues serine 183, serine 191, and serine 197 each carry the phosphoserine modification. Residues 207-217 (SKAHSSGVSSK) show a composition bias toward low complexity. Positions 252–266 (PPQPPCQTFPPPPLP) are enriched in pro residues. The segment covering 383–406 (PATQSQKQYDTPSKTHPNPQQGTS) has biased composition (polar residues). The segment covering 408–424 (LEDDLQLSDSEDSDTEQ) has biased composition (acidic residues). The segment covering 429–438 (PPSPPAPPSA) has biased composition (pro residues). The span at 457 to 484 (ESSESDSSSDSESESSSSDSEEEEENEP) shows a compositional bias: acidic residues. Position 682 is an N6-acetyllysine (lysine 682). The segment covering 710–728 (SQGPSHSSRGSSGSVRTSG) has biased composition (low complexity). Serine 755 and serine 760 each carry phosphoserine. Disordered regions lie at residues 777–969 (RIPQ…RQQA) and 1094–1125 (APSP…QSSA). Residues 789 to 808 (RKAEDKQLSAGKKQDSETKS) are compositionally biased toward basic and acidic residues. Composition is skewed to low complexity over residues 824-846 (KKST…SSHT), 867-886 (PPAS…PSRP), 902-915 (PPRS…SSTD), and 1115-1125 (PASSVGSQSSA).

It belongs to the AF4 family. In terms of assembly, component of the super elongation complex (SEC), at least composed of EAF1, EAF2, CDK9, MLLT3/AF9, AFF (AFF1 or AFF4), the P-TEFb complex and ELL (ELL, ELL2 or ELL3).

It is found in the nucleus. The sequence is that of AF4/FMR2 family member 1 (Aff1) from Mus musculus (Mouse).